Reading from the N-terminus, the 171-residue chain is MSKANSFNKKDLIACGHGQLFGKNSPRLPIDNMLMMDRITKINADGGEFGKGEIVAELDINPDLWFFGCHFSGDPVMPGCLGLDALWQLVGFFLGWEGAEGKGRALGVGEVKFTGQVLPDAKKVTYKLTIKRKVYRKLVMGIADATMEVDGREIYSAKDLKVGIFTDTSSF.

Residue H70 is part of the active site.

It belongs to the thioester dehydratase family. FabA subfamily. As to quaternary structure, homodimer.

The protein resides in the cytoplasm. It catalyses the reaction a (3R)-hydroxyacyl-[ACP] = a (2E)-enoyl-[ACP] + H2O. It carries out the reaction (3R)-hydroxydecanoyl-[ACP] = (2E)-decenoyl-[ACP] + H2O. The enzyme catalyses (2E)-decenoyl-[ACP] = (3Z)-decenoyl-[ACP]. It participates in lipid metabolism; fatty acid biosynthesis. In terms of biological role, necessary for the introduction of cis unsaturation into fatty acids. Catalyzes the dehydration of (3R)-3-hydroxydecanoyl-ACP to E-(2)-decenoyl-ACP and then its isomerization to Z-(3)-decenoyl-ACP. Can catalyze the dehydratase reaction for beta-hydroxyacyl-ACPs with saturated chain lengths up to 16:0, being most active on intermediate chain length. This chain is 3-hydroxydecanoyl-[acyl-carrier-protein] dehydratase, found in Shewanella sediminis (strain HAW-EB3).